A 718-amino-acid polypeptide reads, in one-letter code: SANT and BTB domain regulator of class switch recombination (718 aa).

Residues 21–59 (DMILYPLIGIPQTINWETIARLVPGLTPKECAKRFDELK) enclose the SANT domain. Positions 118-134 (ASTRNCSSESENCTTHN) are enriched in polar residues. Positions 118–142 (ASTRNCSSESENCTTHNGGEMTEES) are disordered. The 109-residue stretch at 147 to 255 (MVIHVCDEAK…QCIQYCHKNM (109 aa)) folds into the BTB domain. Positions 555-576 (SEEEEYTTGSEVTEDEVGDEEE) are enriched in acidic residues. 2 disordered regions span residues 555 to 622 (SEEE…SPFV) and 692 to 718 (SVPV…GRPA). A compositionally biased stretch (basic residues) spans 580–595 (KQRKKEKPKKFTRQPK). Residues 604–615 (QRKEKALEKSAS) show a composition bias toward basic and acidic residues.

This sequence belongs to the KIAA1841 family. In terms of assembly, homodimer. Interacts (via the BTB domain) with HDAC1 and NCOR2.

Functionally, negatively regulates class switch recombination or isotype switching in splenic B-cells. The chain is SANT and BTB domain regulator of class switch recombination from Homo sapiens (Human).